The sequence spans 65 residues: Large ribosomal subunit protein bL28 (65 aa).

The protein belongs to the bacterial ribosomal protein bL28 family.

This chain is Large ribosomal subunit protein bL28, found in Lachnoclostridium phytofermentans (strain ATCC 700394 / DSM 18823 / ISDg) (Clostridium phytofermentans).